We begin with the raw amino-acid sequence, 663 residues long: Oligopeptide-binding protein SarA (663 aa).

The first 22 residues, 1 to 22, serve as a signal peptide directing secretion; sequence MKKGKILALAGVALLATGVLAA. Cys-23 carries N-palmitoyl cysteine lipidation. Cys-23 is lipidated: S-diacylglycerol cysteine. A disordered region spans residues 637-663; the sequence is QKAQEKWNKERAESNKKAQEELEKHVK.

The protein belongs to the bacterial solute-binding protein 5 family.

It is found in the cell membrane. In terms of biological role, may be involved in the expression of cell surface properties important for colonization of the human oral cavity. It may also be involved in uptake processes. The chain is Oligopeptide-binding protein SarA (sarA) from Streptococcus gordonii (strain Challis / ATCC 35105 / BCRC 15272 / CH1 / DL1 / V288).